The primary structure comprises 760 residues: DNA replication licensing factor mcm7 (760 aa).

In terms of domain architecture, MCM spans 353-559; that stretch reads VYEKLAKSIA…ETDEHLAQHV (207 aa). ATP contacts are provided by Y366, G406, A408, K409, S410, N511, R536, and R630. The short motif at 535 to 538 is the Arginine finger element; the sequence is SRFD.

Belongs to the MCM family. Component of the mcm2-7 complex. The complex forms a toroidal hexameric ring with the proposed subunit order mcm2-mcm6-mcm4-mcm7-mcm3-mcm5. The heterodimers of mcm4/mcm6 and mcm3/mcm5 interact with mcm2 and mcm7. Interacts with sld3 and mcm10.

The protein resides in the nucleus. It carries out the reaction ATP + H2O = ADP + phosphate + H(+). Acts as a component of the MCM2-7 complex (MCM complex) which is the replicative helicase essential for 'once per cell cycle' DNA replication initiation and elongation in eukaryotic cells. Core component of CDC45-MCM-GINS (CMG) helicase, the molecular machine that unwinds template DNA during replication, and around which the replisome is built. The active ATPase sites in the MCM2-7 ring are formed through the interaction surfaces of two neighboring subunits such that a critical structure of a conserved arginine finger motif is provided in trans relative to the ATP-binding site of the Walker A box of the adjacent subunit. The six ATPase active sites, however, are likely to contribute differentially to the complex helicase activity. Required for the progression of S phase. This is DNA replication licensing factor mcm7 (mcm7) from Schizosaccharomyces pombe (strain 972 / ATCC 24843) (Fission yeast).